The sequence spans 162 residues: Phospholipase A and acyltransferase 3 (162 aa).

Topologically, residues 1–133 (MRAPIPEPKP…VARSDQVRDV (133 aa)) are cytoplasmic. An LRAT domain is found at 13–129 (LIEIFRPFYR…LRYGVARSDQ (117 aa)). Residues H23 and H35 contribute to the active site. Residue C113 is the Acyl-thioester intermediate of the active site. Residues 134-154 (IIAASVAGMGLAAMSLIGVMF) traverse the membrane as a helical segment. Over 155–162 (SRNKRQKQ) the chain is Lumenal.

It belongs to the H-rev107 family. Interacts with PPP2R1A; this interaction might decrease PP2A activity. Widely expressed. Low expression, if any, in hematopoietic cells and thymus. In testis, confined to round spermatids. Expressed in normal ovarian epithelial cells. Down-regulated in some ovarian carcinomas and testicular germ cell tumors. Highly expressed in white adipose tissue.

It localises to the cell membrane. It is found in the cytoplasm. The protein localises to the cytosol. Its subcellular location is the perinuclear region. The protein resides in the peroxisome membrane. It localises to the mitochondrion membrane. It is found in the nucleus envelope. The protein localises to the lysosome membrane. Its subcellular location is the endoplasmic reticulum membrane. It catalyses the reaction a 1,2-diacyl-sn-glycero-3-phosphocholine + H2O = a 1-acyl-sn-glycero-3-phosphocholine + a fatty acid + H(+). The enzyme catalyses a 1,2-diacyl-sn-glycero-3-phosphocholine + H2O = a 2-acyl-sn-glycero-3-phosphocholine + a fatty acid + H(+). It carries out the reaction 1,2-dihexadecanoyl-sn-glycero-3-phosphocholine + H2O = 1-hexadecanoyl-sn-glycero-3-phosphocholine + hexadecanoate + H(+). The catalysed reaction is 1,2-dihexadecanoyl-sn-glycero-3-phosphocholine + H2O = 2-hexadecanoyl-sn-glycero-3-phosphocholine + hexadecanoate + H(+). It catalyses the reaction 1-hexadecanoyl-2-(9Z-octadecenoyl)-sn-glycero-3-phosphocholine + H2O = 2-(9Z-octadecenoyl)-sn-glycero-3-phosphocholine + hexadecanoate + H(+). The enzyme catalyses 1-hexadecanoyl-2-(9Z-octadecenoyl)-sn-glycero-3-phosphocholine + H2O = 1-hexadecanoyl-sn-glycero-3-phosphocholine + (9Z)-octadecenoate + H(+). It carries out the reaction 1-hexadecanoyl-2-(5Z,8Z,11Z,14Z-eicosatetraenoyl)-sn-glycero-3-phosphocholine + H2O = 1-hexadecanoyl-sn-glycero-3-phosphocholine + (5Z,8Z,11Z,14Z)-eicosatetraenoate + H(+). The catalysed reaction is 1-hexadecanoyl-2-(5Z,8Z,11Z,14Z-eicosatetraenoyl)-sn-glycero-3-phosphocholine + H2O = 2-(5Z,8Z,11Z,14Z)-eicosatetraenoyl-sn-glycero-3-phosphocholine + hexadecanoate + H(+). It catalyses the reaction 1-hexadecanoyl-2-(9Z,12Z-octadecadienoyl)-sn-glycero-3-phosphoethanolamine + H2O = 1-hexadecanoyl-sn-glycero-3-phosphoethanolamine + (9Z,12Z)-octadecadienoate + H(+). The enzyme catalyses 1-hexadecanoyl-2-(9Z,12Z-octadecadienoyl)-sn-glycero-3-phosphoethanolamine + H2O = 2-(9Z,12Z)-octadecadienoyl-sn-glycero-3-phosphoethanolamine + hexadecanoate + H(+). It carries out the reaction 1-hexadecanoyl-2-(5Z,8Z,11Z,14Z-eicosatetraenoyl)-sn-glycero-3-phosphoethanolamine + H2O = 1-hexadecanoyl-sn-glycero-3-phosphoethanolamine + (5Z,8Z,11Z,14Z)-eicosatetraenoate + H(+). The catalysed reaction is 1-hexadecanoyl-2-(5Z,8Z,11Z,14Z-eicosatetraenoyl)-sn-glycero-3-phosphoethanolamine + H2O = 2-(5Z,8Z,11Z,14Z)-eicosatetraenoyl-sn-glycero-3-phosphoethanolamine + hexadecanoate + H(+). It catalyses the reaction 1-hexanoyl-2-acyl-sn-glycero-3-phosphocholine + H2O = hexanoate + a 2-acyl-sn-glycero-3-phosphocholine + H(+). The enzyme catalyses 1-hexanoyl-2-acyl-sn-glycero-3-phosphocholine + H2O = 1-hexanoyl-sn-glycero-3-phosphocholine + a fatty acid + H(+). It carries out the reaction 1,2-diheptadecanoyl-sn-glycero-3-phosphoethanolamine + 1-(9Z-octadecenoyl)-2-hexadecanoyl-sn-glycero-3-phosphocholine = 1,2-diheptadecanoyl-sn-glycero-3-phospho-N-hexadecanoyl-ethanolamine + 1-(9Z-octadecenoyl)-sn-glycero-3-phosphocholine + H(+). The catalysed reaction is 1,2-diheptadecanoyl-sn-glycero-3-phosphoethanolamine + 1-(9Z-octadecenoyl)-2-hexadecanoyl-sn-glycero-3-phosphocholine = 1,2-diheptadecanoyl-sn-glycero-3-phospho-N-(9Z-octadecenoyl)-ethanolamine + 2-hexadecanoyl-sn-glycero-3-phosphocholine + H(+). It catalyses the reaction 1,2-dihexanoyl-sn-glycero-3-phosphoethanolamine + 2-heptanoyl-sn-glycero-3-phosphocholine = hexanoyl-sn-glycero-3-phosphoethanolamine + 1-hexanoyl-2-heptanoyl-sn-glycero-3-phosphocholine. The enzyme catalyses 1-hexadecanoyl-2-octadecanoyl-sn-glycero-3-phosphocholine + H2O = octadecanoate + 1-hexadecanoyl-sn-glycero-3-phosphocholine + H(+). It carries out the reaction 1-hexadecanoyl-2-octadecanoyl-sn-glycero-3-phosphocholine + H2O = 2-octadecanoyl-sn-glycero-3-phosphocholine + hexadecanoate + H(+). The catalysed reaction is 1-octadecanoyl-2-hexadecanoyl-sn-glycero-3-phosphocholine + H2O = 1-octadecanoyl-sn-glycero-3-phosphocholine + hexadecanoate + H(+). It catalyses the reaction 1-octadecanoyl-2-hexadecanoyl-sn-glycero-3-phosphocholine + H2O = 2-hexadecanoyl-sn-glycero-3-phosphocholine + octadecanoate + H(+). The enzyme catalyses 1-hexadecanoyl-2-(9Z,12Z-octadecadienoyl)-sn-glycero-3-phosphocholine + H2O = (9Z,12Z)-octadecadienoate + 1-hexadecanoyl-sn-glycero-3-phosphocholine + H(+). It carries out the reaction 1-hexadecanoyl-2-(9Z,12Z-octadecadienoyl)-sn-glycero-3-phosphocholine + H2O = 2-(9Z,12Z-octadecadienoyl)-sn-glycero-3-phosphocholine + hexadecanoate + H(+). The catalysed reaction is 1,2-di-(9Z-octadecenoyl)-sn-glycero-3-phosphocholine + H2O = 2-(9Z-octadecenoyl)-sn-glycero-3-phosphocholine + (9Z)-octadecenoate + H(+). It catalyses the reaction 1,2-dihexadecanoyl-sn-glycero-3-phosphocholine + H2O = hexadecanoyl-sn-glycero-3-phosphocholine + hexadecanoate + H(+). The enzyme catalyses 1,2-di-(9Z-octadecenoyl)-sn-glycero-3-phosphocholine + H2O = 1-(9Z-octadecenoyl)-sn-glycero-3-phosphocholine + (9Z)-octadecenoate + H(+). It carries out the reaction 1,2-di-(9Z-octadecenoyl)-sn-glycero-3-phosphoethanolamine + 1,2-dihexadecanoyl-sn-glycero-3-phosphocholine = hexadecanoyl-sn-glycero-3-phosphocholine + N-hexadecanoyl-1,2-di-(9Z-octadecenoyl)-sn-glycero-3-phosphoethanolamine + H(+). The catalysed reaction is 1,2-di-(9Z,12Z-octadecadienoyl)-sn-glycero-3-phosphocholine + H2O = 1-(9Z,12Z)-octadecadienoyl-sn-glycero-3-phosphocholine + (9Z,12Z)-octadecadienoate + H(+). Its function is as follows. Exhibits both phospholipase A1/2 and acyltransferase activities. Shows phospholipase A1 (PLA1) and A2 (PLA2) activity, catalyzing the calcium-independent release of fatty acids from the sn-1 or sn-2 position of glycerophospholipids. For most substrates, PLA1 activity is much higher than PLA2 activity. Shows O-acyltransferase activity,catalyzing the transfer of a fatty acyl group from glycerophospholipid to the hydroxyl group of lysophospholipid. Shows N-acyltransferase activity, catalyzing the calcium-independent transfer of a fatty acyl group at the sn-1 position of phosphatidylcholine (PC) and other glycerophospholipids to the primary amine of phosphatidylethanolamine (PE), forming N-acylphosphatidylethanolamine (NAPE), which serves as precursor for N-acylethanolamines (NAEs). Exhibits high N-acyltransferase activity and low phospholipase A1/2 activity. Required for complete organelle rupture and degradation that occur during eye lens terminal differentiation, when fiber cells that compose the lens degrade all membrane-bound organelles in order to provide lens with transparency to allow the passage of light. Organelle membrane degradation is probably catalyzed by the phospholipase activity. (Microbial infection) Acts as a host factor for picornaviruses: required during early infection to promote viral genome release into the cytoplasm. May act as a cellular sensor of membrane damage at sites of virus entry, which relocalizes to sites of membrane rupture upon virus unfection. Facilitates safe passage of the RNA away from LGALS8, enabling viral genome translation by host ribosome. May also be involved in initiating pore formation, increasing pore size or in maintaining pores for genome delivery. The lipid-modifying enzyme activity is required for this process. The polypeptide is Phospholipase A and acyltransferase 3 (Homo sapiens (Human)).